A 558-amino-acid polypeptide reads, in one-letter code: MHETAAAPAPAGFVPWPDDVAARYTAAGHWEGRSLGTHLAEAARKVPEAVCLVDGPVRMSYSELMARADGAAVRMRGLGIRPADRVVVQLPNCWEHVVVTMACLRLGALPIWALPQYRHRELSGVVTHARASALVVPDVYREFDHQALAHEVAEAQPTVRHVLVAGSDVRPDSVDLRALCEPLDADEAARVAAELDRSAPRGEEVAMLKLSGGTTGLPKLVARTHNDLSYMIKRAAQVCGFGRDTVYLAVLPLGHGFPNTGPGVLGTLLAGGRVVISGSPAPEAAFALMERERVTATSVVPAIVMRWLQYRDERPGADLGSLELMQVGASRLEPEVARQVGPKLGCRLQQVFGMAEGLLCLTRLDDPDDVVHYTQGRPISPDDEIRVVDPEGRTVGVGEPGALLTRGPYTPRGYYDSPSANARAFTPDGWYRTGDLVRRTPDGNLIVVGREKDLINRGGEKINAEEVEGFAVQVDGVLQAAAVGLPDSELGERICLFVVLADGTRVELADVRKVMENAETASFKLPERLITLPSLPTTPMGKIDKKALRAAAGRMSET.

ATP is bound by residues glycine 212–glycine 213, alanine 329–arginine 331, valine 351, aspartate 435, arginine 450, and lysine 542.

The protein belongs to the ATP-dependent AMP-binding enzyme family.

It catalyses the reaction 2-hydroxy-7-methoxy-5-methyl-1-naphthoate + ATP + CoA = 2-hydroxy-7-methoxy-5-methyl-1-naphthoyl-CoA + AMP + diphosphate. Its pathway is antibiotic biosynthesis. Functionally, catalyzes the activation of 2-hydroxy-7-methoxy-5-methyl-1-naphthoate in the biosynthesis of the naphthoate moiety of the neocarzinostatin chromophore. Also catalyzes the activation of other 1-naphthoic acid analogs such as 2-hydroxy-5-methyl-1-naphthoate or 2,7-dihydroxy-5-methyl-1-naphthoate in vitro. This chain is 2-hydroxy-7-methoxy-5-methyl-1-naphthoate--CoA ligase, found in Streptomyces carzinostaticus.